Reading from the N-terminus, the 285-residue chain is 4-hydroxybenzoate octaprenyltransferase (285 aa).

Helical transmembrane passes span 28–48, 86–106, 110–130, 133–153, 165–185, 210–230, 232–252, and 262–284; these read LWAM…WIFV, IAAW…FALV, NALT…YPFF, FFAI…PMAF, WLML…YAMV, IMLC…LLGL, WPYW…YTLI, and AAFR…AYAI.

Belongs to the UbiA prenyltransferase family. Mg(2+) serves as cofactor.

It localises to the cell inner membrane. The catalysed reaction is all-trans-octaprenyl diphosphate + 4-hydroxybenzoate = 4-hydroxy-3-(all-trans-octaprenyl)benzoate + diphosphate. Its pathway is cofactor biosynthesis; ubiquinone biosynthesis. Catalyzes the prenylation of para-hydroxybenzoate (PHB) with an all-trans polyprenyl group. Mediates the second step in the final reaction sequence of ubiquinone-8 (UQ-8) biosynthesis, which is the condensation of the polyisoprenoid side chain with PHB, generating the first membrane-bound Q intermediate 3-octaprenyl-4-hydroxybenzoate. This is 4-hydroxybenzoate octaprenyltransferase from Cupriavidus necator (strain ATCC 17699 / DSM 428 / KCTC 22496 / NCIMB 10442 / H16 / Stanier 337) (Ralstonia eutropha).